A 310-amino-acid polypeptide reads, in one-letter code: Altered inheritance of mitochondria protein 46, mitochondrial (310 aa).

The transit peptide at 1–20 directs the protein to the mitochondrion; that stretch reads MRLISKVLVKTNCLEVGMRR.

It belongs to the AIM18/AIM46 family.

Its subcellular location is the mitochondrion. In Saccharomyces cerevisiae (strain RM11-1a) (Baker's yeast), this protein is Altered inheritance of mitochondria protein 46, mitochondrial (AIM46).